The primary structure comprises 431 residues: uncharacterized protein (431 aa).

4Fe-4S ferredoxin-type domains follow at residues 336 to 367 (VRPVHHPERCTDCAVCLAARRCPTHAIDNGLD) and 362 to 391 (IDNGLDLDRCFGCGVCAWSCPSGAYEMDTG).

This is an uncharacterized protein from Methanothermobacter thermautotrophicus (strain ATCC 29096 / DSM 1053 / JCM 10044 / NBRC 100330 / Delta H) (Methanobacterium thermoautotrophicum).